A 640-amino-acid polypeptide reads, in one-letter code: Biosynthetic arginine decarboxylase (640 aa).

N6-(pyridoxal phosphate)lysine is present on Lys109. 291–301 (LDVGGGLGVDY) serves as a coordination point for substrate.

Belongs to the Orn/Lys/Arg decarboxylase class-II family. SpeA subfamily. Mg(2+) serves as cofactor. Pyridoxal 5'-phosphate is required as a cofactor.

It carries out the reaction L-arginine + H(+) = agmatine + CO2. Its pathway is amine and polyamine biosynthesis; agmatine biosynthesis; agmatine from L-arginine: step 1/1. Its function is as follows. Catalyzes the biosynthesis of agmatine from arginine. The protein is Biosynthetic arginine decarboxylase of Synechococcus sp. (strain RCC307).